Here is a 163-residue protein sequence, read N- to C-terminus: ECF RNA polymerase sigma factor SigM (163 aa).

The Polymerase core binding motif lies at 30–43 (DLLQETFMRAYIHI). Residues 127–146 (YKEASHIMNISEANFKSVLF) constitute a DNA-binding region (H-T-H motif).

The protein belongs to the sigma-70 factor family. ECF subfamily. Interacts with the N-terminus of YhdL, which is probably its anti-sigma factor. Interacts transiently with the RNAP core.

Its function is as follows. Sigma factors are initiation factors that promote the attachment of RNA polymerase (RNAP) to specific initiation sites and are then released. Extracytoplasmic function (ECF) sigma factors are held in an inactive form by a cognate anti-sigma factor (YhdL) until released. This sigma factor is involved in the maintenance of membrane and cell wall integrity in response to environmental stresses including salt, acid, ethanol and antibiotics stress. Partially regulates transcription from a number of genes including disA. Associates with RNAP core under all growth phases. The protein is ECF RNA polymerase sigma factor SigM (sigM) of Bacillus subtilis (strain 168).